Consider the following 122-residue polypeptide: Large ribosomal subunit protein uL14 (122 aa).

This sequence belongs to the universal ribosomal protein uL14 family. As to quaternary structure, part of the 50S ribosomal subunit. Forms a cluster with proteins L3 and L19. In the 70S ribosome, L14 and L19 interact and together make contacts with the 16S rRNA in bridges B5 and B8.

Its function is as follows. Binds to 23S rRNA. Forms part of two intersubunit bridges in the 70S ribosome. The chain is Large ribosomal subunit protein uL14 from Desulfitobacterium hafniense (strain DSM 10664 / DCB-2).